The primary structure comprises 581 residues: 2-succinyl-5-enolpyruvyl-6-hydroxy-3-cyclohexene-1-carboxylate synthase (581 aa).

This sequence belongs to the TPP enzyme family. MenD subfamily. Homodimer. Requires Mg(2+) as cofactor. Mn(2+) is required as a cofactor. Thiamine diphosphate serves as cofactor.

The enzyme catalyses isochorismate + 2-oxoglutarate + H(+) = 5-enolpyruvoyl-6-hydroxy-2-succinyl-cyclohex-3-ene-1-carboxylate + CO2. It functions in the pathway quinol/quinone metabolism; 1,4-dihydroxy-2-naphthoate biosynthesis; 1,4-dihydroxy-2-naphthoate from chorismate: step 2/7. The protein operates within cofactor biosynthesis; phylloquinone biosynthesis. Its function is as follows. Catalyzes the thiamine diphosphate-dependent decarboxylation of 2-oxoglutarate and the subsequent addition of the resulting succinic semialdehyde-thiamine pyrophosphate anion to isochorismate to yield 2-succinyl-5-enolpyruvyl-6-hydroxy-3-cyclohexene-1-carboxylate (SEPHCHC). In Gloeothece citriformis (strain PCC 7424) (Cyanothece sp. (strain PCC 7424)), this protein is 2-succinyl-5-enolpyruvyl-6-hydroxy-3-cyclohexene-1-carboxylate synthase.